Reading from the N-terminus, the 314-residue chain is Protoheme IX farnesyltransferase (314 aa).

8 consecutive transmembrane segments (helical) span residues 30-50 (VMSL…VSVH), 51-71 (PVIG…SGAL), 122-142 (FLAA…YSMW), 151-171 (IVIG…IATG), 178-198 (WLMF…LALF), 224-244 (IIAY…SAIG), 247-267 (VYLA…IDIW), and 285-305 (FFRL…LESA).

Belongs to the UbiA prenyltransferase family. Protoheme IX farnesyltransferase subfamily. As to quaternary structure, interacts with CtaA.

The protein localises to the cell inner membrane. It catalyses the reaction heme b + (2E,6E)-farnesyl diphosphate + H2O = Fe(II)-heme o + diphosphate. Its pathway is porphyrin-containing compound metabolism; heme O biosynthesis; heme O from protoheme: step 1/1. Converts heme B (protoheme IX) to heme O by substitution of the vinyl group on carbon 2 of heme B porphyrin ring with a hydroxyethyl farnesyl side group. The sequence is that of Protoheme IX farnesyltransferase from Roseobacter denitrificans (strain ATCC 33942 / OCh 114) (Erythrobacter sp. (strain OCh 114)).